A 972-amino-acid polypeptide reads, in one-letter code: Serine/threonine-protein kinase ATG1 (972 aa).

Residues 18–319 (YVVEKEIGRG…FTEFFSNGLV (302 aa)) form the Protein kinase domain. ATP-binding positions include 24–32 (IGRGSFAVV) and Lys-48. Asp-166 acts as the Proton acceptor in catalysis. Disordered stretches follow at residues 359–394 (KRAS…QSDQ), 424–444 (YNNQ…SNGR), 467–506 (ALQS…HRTT), 562–605 (ASQA…SRRP), and 743–764 (DDEE…NSSG). Basic and acidic residues predominate over residues 424–436 (YNNQEERSNEERQ). A compositionally biased stretch (polar residues) spans 562–584 (ASQALQMARHSSTSVSAANTAKQ). The segment covering 585 to 605 (TLLRRNSRTLSSSGASTSRRP) has biased composition (low complexity). Positions 750–759 (EHSPGAETYR) are enriched in basic and acidic residues.

This sequence belongs to the protein kinase superfamily. Ser/Thr protein kinase family. APG1/unc-51/ULK1 subfamily. Homodimer. Forms a ternary complex with ATG13 and ATG17.

The protein resides in the cytoplasm. It localises to the preautophagosomal structure membrane. The catalysed reaction is L-seryl-[protein] + ATP = O-phospho-L-seryl-[protein] + ADP + H(+). It catalyses the reaction L-threonyl-[protein] + ATP = O-phospho-L-threonyl-[protein] + ADP + H(+). Serine/threonine protein kinase involved in the cytoplasm to vacuole transport (Cvt) and found to be essential in autophagy, where it is required for the formation of autophagosomes. Involved in the clearance of protein aggregates which cannot be efficiently cleared by the proteasome. Required for selective autophagic degradation of the nucleus (nucleophagy) as well as for mitophagy which contributes to regulate mitochondrial quantity and quality by eliminating the mitochondria to a basal level to fulfill cellular energy requirements and preventing excess ROS production. Also involved in endoplasmic reticulum-specific autophagic process, in selective removal of ER-associated degradation (ERAD) substrates. Plays a key role in ATG9 and ATG23 cycling through the pre-autophagosomal structure and is necessary to promote ATG18 binding to ATG9 through phosphorylation of ATG9. Catalyzes phosphorylation of ATG4, decreasing the interaction between ATG4 and ATG8 and impairing deconjugation of PE-conjugated forms of ATG8. This Eremothecium gossypii (strain ATCC 10895 / CBS 109.51 / FGSC 9923 / NRRL Y-1056) (Yeast) protein is Serine/threonine-protein kinase ATG1.